Reading from the N-terminus, the 221-residue chain is Adenylate kinase (221 aa).

Residue 10–15 (GAGKGT) participates in ATP binding. Residues 30 to 59 (STGDMLRAAVKARTELGVAAKKIMDAGGLV) are NMP. Residues threonine 31, arginine 36, 57–59 (GLV), 85–88 (GFPR), and glutamine 92 contribute to the AMP site. The interval 122–159 (GRRVHLASGRTYHIKFNPPKVEGKDDITGDPLIQRDDD) is LID. ATP contacts are provided by residues arginine 123 and 132 to 133 (TY). AMP contacts are provided by arginine 156 and arginine 167. An ATP-binding site is contributed by serine 207.

Belongs to the adenylate kinase family. As to quaternary structure, monomer.

Its subcellular location is the cytoplasm. It catalyses the reaction AMP + ATP = 2 ADP. It participates in purine metabolism; AMP biosynthesis via salvage pathway; AMP from ADP: step 1/1. Functionally, catalyzes the reversible transfer of the terminal phosphate group between ATP and AMP. Plays an important role in cellular energy homeostasis and in adenine nucleotide metabolism. The polypeptide is Adenylate kinase (Polynucleobacter necessarius subsp. necessarius (strain STIR1)).